A 259-amino-acid polypeptide reads, in one-letter code: 5'-nucleotidase SurE (259 aa).

A divalent metal cation contacts are provided by Asp-10, Asp-11, Ser-41, and Asn-96.

Belongs to the SurE nucleotidase family. Requires a divalent metal cation as cofactor.

Its subcellular location is the cytoplasm. The enzyme catalyses a ribonucleoside 5'-phosphate + H2O = a ribonucleoside + phosphate. Nucleotidase that shows phosphatase activity on nucleoside 5'-monophosphates. The protein is 5'-nucleotidase SurE of Wolinella succinogenes (strain ATCC 29543 / DSM 1740 / CCUG 13145 / JCM 31913 / LMG 7466 / NCTC 11488 / FDC 602W) (Vibrio succinogenes).